Here is an 832-residue protein sequence, read N- to C-terminus: Cytosolic carboxypeptidase-like protein 5 (832 aa).

The interval 27–50 (TVPSDGEGVGGAATAPTSGSASSP) is disordered. The segment covering 38 to 50 (AATAPTSGSASSP) has biased composition (low complexity). The Peptidase M14 domain occupies 157 to 571 (YPFSYSDCQD…ALAIAALDMA (415 aa)). Zn(2+)-binding residues include histidine 252 and glutamate 255. Positions 343-354 (NSKNPSNQQPSS) are enriched in low complexity. Disordered regions lie at residues 343 to 362 (NSKNPSNQQPSSLHLPPEVP) and 376 to 402 (LHLGQSPDGENHDRWTETEPTEEKTDP). Positions 384 to 401 (GENHDRWTETEPTEEKTD) are enriched in basic and acidic residues. Histidine 435 is a Zn(2+) binding site. Glutamate 517 serves as the catalytic Proton donor/acceptor. Residues 606–752 (STANVGLNKK…ASPTSSRNMG (147 aa)) are disordered. Residues 621 to 636 (PPKSNNGLPVSCSENA) show a composition bias toward polar residues. A compositionally biased stretch (low complexity) spans 644–654 (STGTSTGGSSS). Polar residues predominate over residues 655 to 666 (QQNSPQMKNSPS). A compositionally biased stretch (low complexity) spans 708–752 (QQQQQQQQQQQQQQQQPLNQRSTTSSLAPSPTLASASPTSSRNMG).

Belongs to the peptidase M14 family. It depends on Zn(2+) as a cofactor.

It localises to the cytoplasm. The protein localises to the cytosol. Its subcellular location is the nucleus. It is found in the cytoskeleton. The protein resides in the spindle. It localises to the midbody. It carries out the reaction gamma-L-glutamyl-L-glutamyl-[protein] + H2O = L-glutamyl-[protein] + L-glutamate. It catalyses the reaction (L-glutamyl)(n+1)-gamma-L-glutamyl-L-glutamyl-[protein] + H2O = (L-glutamyl)(n)-gamma-L-glutamyl-L-glutamyl-[protein] + L-glutamate. The enzyme catalyses C-terminal L-alpha-aminoacyl-L-glutamyl-[tubulin] + H2O = C-terminal L-alpha-aminoacyl-[tubulin] + L-glutamate. The catalysed reaction is C-terminal L-alpha-aminoacyl-L-glutamyl-L-glutamyl-[tubulin] + H2O = C-terminal L-alpha-aminoacyl-L-glutamyl-[tubulin] + L-glutamate. Metallocarboxypeptidase that mediates deglutamylation of tubulin and non-tubulin target proteins. Catalyzes the removal of polyglutamate side chains present on the gamma-carboxyl group of glutamate residues within the C-terminal tail of alpha- and beta-tubulin. Cleaves alpha- and gamma-linked polyglutamate tubulin side-chain, as well as the branching point glutamate. Also catalyzes the removal of alpha-linked glutamate residues from the carboxy-terminus of alpha-tubulin. Mediates deglutamylation of nucleotidyltransferase CGAS, leading to CGAS antiviral defense response activation. The protein is Cytosolic carboxypeptidase-like protein 5 (Agbl5) of Rattus norvegicus (Rat).